The following is a 251-amino-acid chain: Large ribosomal subunit protein uL3 (251 aa).

At Gln-151 the chain carries N5-methylglutamine. Residues Lys-214 to Gly-251 form a disordered region. Residues Ala-231–Gly-251 show a composition bias toward low complexity.

It belongs to the universal ribosomal protein uL3 family. In terms of assembly, part of the 50S ribosomal subunit. Forms a cluster with proteins L14 and L19. Methylated by PrmB.

Its function is as follows. One of the primary rRNA binding proteins, it binds directly near the 3'-end of the 23S rRNA, where it nucleates assembly of the 50S subunit. This is Large ribosomal subunit protein uL3 from Rhizorhabdus wittichii (strain DSM 6014 / CCUG 31198 / JCM 15750 / NBRC 105917 / EY 4224 / RW1) (Sphingomonas wittichii).